A 371-amino-acid polypeptide reads, in one-letter code: Putative glutamate--cysteine ligase 2 (371 aa).

This sequence belongs to the glutamate--cysteine ligase type 2 family. YbdK subfamily.

It catalyses the reaction L-cysteine + L-glutamate + ATP = gamma-L-glutamyl-L-cysteine + ADP + phosphate + H(+). In terms of biological role, ATP-dependent carboxylate-amine ligase which exhibits weak glutamate--cysteine ligase activity. The protein is Putative glutamate--cysteine ligase 2 of Paraburkholderia xenovorans (strain LB400).